We begin with the raw amino-acid sequence, 531 residues long: Probable peptide ABC transporter periplasmic-binding protein y4tO (531 aa).

The tat-type signal signal peptide spans 1-32 (MTISRRDLFKAGLAAGAALSVPSLLRAQTAVA).

It belongs to the bacterial solute-binding protein 5 family. Predicted to be exported by the Tat system. The position of the signal peptide cleavage has not been experimentally proven.

It is found in the periplasm. Its function is as follows. Probably part of the binding-protein-dependent transport system y4tOPQRS for a peptide. This chain is Probable peptide ABC transporter periplasmic-binding protein y4tO, found in Sinorhizobium fredii (strain NBRC 101917 / NGR234).